Consider the following 144-residue polypeptide: Transcription antitermination protein NusB (144 aa).

Belongs to the NusB family.

Involved in transcription antitermination. Required for transcription of ribosomal RNA (rRNA) genes. Binds specifically to the boxA antiterminator sequence of the ribosomal RNA (rrn) operons. In Pasteurella multocida (strain Pm70), this protein is Transcription antitermination protein NusB.